Here is a 111-residue protein sequence, read N- to C-terminus: Microtubule nucleation factor SSNA1 (111 aa).

Residues 6–71 (QALQNHNNEL…ARKTETKNEY (66 aa)) are a coiled coil.

It belongs to the SSNA1 family. In terms of assembly, self-assembles into fibrils in a head-to-tail fashion.

The protein resides in the cytoplasm. The protein localises to the cytoskeleton. Its subcellular location is the flagellum basal body. It is found in the flagellum axoneme. Functionally, microtubule-binding protein which stabilizes dynamic microtubules by slowing growth and shrinkage at both plus and minus ends and serves as a sensor of microtubule damage. Induces microtubule branching which is mediated by the formation of long SSNA1 fibrils which guide microtubule protofilaments to split apart from the mother microtubule and form daughter microtubules. Required for cell division. This Chlamydomonas reinhardtii (Chlamydomonas smithii) protein is Microtubule nucleation factor SSNA1.